The sequence spans 99 residues: Meromycolate extension acyl carrier protein (99 aa).

Residues 3 to 81 form the Carrier domain; that stretch reads ATQEEIIAGL…DVVAYIQKLE (79 aa). An O-(pantetheine 4'-phosphoryl)serine modification is found at serine 41. Residue lysine 79 forms an Isoglutamyl lysine isopeptide (Lys-Gln) (interchain with Q-Cter in protein Pup) linkage.

It belongs to the acyl carrier protein (ACP) family. In terms of processing, 4'-phosphopantetheine is transferred from CoA to a specific serine of apo-AcpM.

The protein localises to the cytoplasm. Its function is as follows. Acyl carrier protein involved in meromycolate extension. The chain is Meromycolate extension acyl carrier protein (acpM) from Mycolicibacterium smegmatis (strain ATCC 700084 / mc(2)155) (Mycobacterium smegmatis).